The sequence spans 348 residues: Histidinol-phosphate aminotransferase (348 aa).

An N6-(pyridoxal phosphate)lysine modification is found at Lys-207.

It belongs to the class-II pyridoxal-phosphate-dependent aminotransferase family. Histidinol-phosphate aminotransferase subfamily. As to quaternary structure, homodimer. Requires pyridoxal 5'-phosphate as cofactor.

The enzyme catalyses L-histidinol phosphate + 2-oxoglutarate = 3-(imidazol-4-yl)-2-oxopropyl phosphate + L-glutamate. Its pathway is amino-acid biosynthesis; L-histidine biosynthesis; L-histidine from 5-phospho-alpha-D-ribose 1-diphosphate: step 7/9. This is Histidinol-phosphate aminotransferase from Crocosphaera subtropica (strain ATCC 51142 / BH68) (Cyanothece sp. (strain ATCC 51142)).